The sequence spans 210 residues: Pyridoxine/pyridoxamine 5'-phosphate oxidase (210 aa).

Substrate contacts are provided by residues 7–10 and lysine 65; that span reads RDEY. FMN is bound by residues 60 to 65, 75 to 76, arginine 81, lysine 82, and glutamine 104; these read RMVLLK and FT. Substrate is bound by residues tyrosine 122, arginine 126, and serine 130. FMN contacts are provided by residues 139 to 140 and tryptophan 183; that span reads QS. 189–191 is a binding site for substrate; the sequence is RLH. Position 193 (arginine 193) interacts with FMN.

Belongs to the pyridoxamine 5'-phosphate oxidase family. In terms of assembly, homodimer. FMN serves as cofactor.

It catalyses the reaction pyridoxamine 5'-phosphate + O2 + H2O = pyridoxal 5'-phosphate + H2O2 + NH4(+). It carries out the reaction pyridoxine 5'-phosphate + O2 = pyridoxal 5'-phosphate + H2O2. The protein operates within cofactor metabolism; pyridoxal 5'-phosphate salvage; pyridoxal 5'-phosphate from pyridoxamine 5'-phosphate: step 1/1. It functions in the pathway cofactor metabolism; pyridoxal 5'-phosphate salvage; pyridoxal 5'-phosphate from pyridoxine 5'-phosphate: step 1/1. Its function is as follows. Catalyzes the oxidation of either pyridoxine 5'-phosphate (PNP) or pyridoxamine 5'-phosphate (PMP) into pyridoxal 5'-phosphate (PLP). The protein is Pyridoxine/pyridoxamine 5'-phosphate oxidase of Haemophilus influenzae (strain ATCC 51907 / DSM 11121 / KW20 / Rd).